The following is a 422-amino-acid chain: Transcription termination factor Rho 1 (422 aa).

The region spanning 49–124 (AAIGGGVVEI…VKAHSINFTD (76 aa)) is the Rho RNA-BD domain. Residues 173 to 178 (GKGQRA), 185 to 190 (RAGKTI), and Arg216 contribute to the ATP site.

The protein belongs to the Rho family. Homohexamer. The homohexamer assembles into an open ring structure.

Its function is as follows. Facilitates transcription termination by a mechanism that involves Rho binding to the nascent RNA, activation of Rho's RNA-dependent ATPase activity, and release of the mRNA from the DNA template. This chain is Transcription termination factor Rho 1, found in Ehrlichia chaffeensis (strain ATCC CRL-10679 / Arkansas).